The sequence spans 140 residues: Small ribosomal subunit protein uS12 (140 aa).

Asp-102 is subject to 3-methylthioaspartic acid.

This sequence belongs to the universal ribosomal protein uS12 family. Part of the 30S ribosomal subunit. Contacts proteins S8 and S17. May interact with IF1 in the 30S initiation complex.

In terms of biological role, with S4 and S5 plays an important role in translational accuracy. Interacts with and stabilizes bases of the 16S rRNA that are involved in tRNA selection in the A site and with the mRNA backbone. Located at the interface of the 30S and 50S subunits, it traverses the body of the 30S subunit contacting proteins on the other side and probably holding the rRNA structure together. The combined cluster of proteins S8, S12 and S17 appears to hold together the shoulder and platform of the 30S subunit. This is Small ribosomal subunit protein uS12 from Bacillus cereus (strain G9842).